The chain runs to 112 residues: UPF0145 protein LAF_1635 (112 aa).

The protein belongs to the UPF0145 family.

The chain is UPF0145 protein LAF_1635 from Limosilactobacillus fermentum (strain NBRC 3956 / LMG 18251) (Lactobacillus fermentum).